The chain runs to 961 residues: DNA replication licensing factor MCM2 (961 aa).

Positions 1-17 (MDDSENNAPSTPGSPGF) are enriched in polar residues. Disordered stretches follow at residues 1–81 (MDDS…FNDN) and 120–220 (AEAE…EEDE). Over residues 39–78 (SDDDDDDVVGAEEAEVDPNVLPEDDGVVAAEEEEDGEDLF) the composition is skewed to acidic residues. Composition is skewed to basic and acidic residues over residues 120–146 (AEAE…LHDQ) and 166–176 (PPREPRTPRSD). Positions 205–220 (QTDDDPYEDEFDEEDE) are enriched in acidic residues. Residues 380-406 (CSKCGTVLGPFFQNSYTEVKVGSCPEC) form a C4-type zinc finger. One can recognise an MCM domain in the interval 524–730 (IGERIVKSIA…FTDEMLARFV (207 aa)). Residue 574 to 581 (GDPGTAKS) coordinates ATP. The Arginine finger motif lies at 706–709 (SRFD).

The protein belongs to the MCM family. In terms of assembly, component of the minichromosome maintenance (MCM) complex, a heterotetramer composed of MCM2, MCM3, MCM4, MCM5, MCM6 and MCM7. Interacts with CSN5. In terms of tissue distribution, widely expressed, with higher expression in developing tissues.

Its subcellular location is the nucleus. It carries out the reaction ATP + H2O = ADP + phosphate + H(+). Its function is as follows. Probable component of the MCM2-7 complex (MCM complex) that may function as a DNA helicase and which is essential to undergo a single round of replication initiation and elongation per cell cycle in eukaryotic cells. Can complement the fission yeast mcm2 mutant. This chain is DNA replication licensing factor MCM2, found in Oryza sativa subsp. japonica (Rice).